A 404-amino-acid chain; its full sequence is Imidazolonepropionase (404 aa).

Residues His-73 and His-75 each coordinate Fe(3+). Residues His-73 and His-75 each coordinate Zn(2+). Arg-82, Tyr-145, and His-178 together coordinate 4-imidazolone-5-propanoate. Tyr-145 is an N-formimidoyl-L-glutamate binding site. A Fe(3+)-binding site is contributed by His-243. Residue His-243 coordinates Zn(2+). Gln-246 lines the 4-imidazolone-5-propanoate pocket. Asp-318 lines the Fe(3+) pocket. Asp-318 provides a ligand contact to Zn(2+). N-formimidoyl-L-glutamate contacts are provided by Asn-320 and Gly-322. Ser-323 serves as a coordination point for 4-imidazolone-5-propanoate.

It belongs to the metallo-dependent hydrolases superfamily. HutI family. It depends on Zn(2+) as a cofactor. Requires Fe(3+) as cofactor.

The protein resides in the cytoplasm. The catalysed reaction is 4-imidazolone-5-propanoate + H2O = N-formimidoyl-L-glutamate. Its pathway is amino-acid degradation; L-histidine degradation into L-glutamate; N-formimidoyl-L-glutamate from L-histidine: step 3/3. Its function is as follows. Catalyzes the hydrolytic cleavage of the carbon-nitrogen bond in imidazolone-5-propanoate to yield N-formimidoyl-L-glutamate. It is the third step in the universal histidine degradation pathway. The chain is Imidazolonepropionase from Bradyrhizobium sp. (strain BTAi1 / ATCC BAA-1182).